The following is a 98-amino-acid chain: Cuticle protein 67, isoform A (98 aa).

Repeat copies occupy residues 7 to 10, 15 to 18, 22 to 25, 79 to 82, 86 to 89, and 92 to 95.

Its function is as follows. Component of the cuticle of migratory locust which contains more than 100 different structural proteins. The protein is Cuticle protein 67, isoform A of Locusta migratoria (Migratory locust).